The primary structure comprises 109 residues: Translation initiation factor IF-1, chloroplastic (109 aa).

Positions 18–93 constitute an S1-like domain; that stretch reads KSLNQEKENL…TRGRIIYRLK (76 aa).

This sequence belongs to the IF-1 family. In terms of assembly, component of the 30S ribosomal translation pre-initiation complex which assembles on the 30S ribosome in the order IF-2 and IF-3, IF-1 and N-formylmethionyl-tRNA(fMet); mRNA recruitment can occur at any time during PIC assembly.

It is found in the plastid. The protein resides in the chloroplast. Functionally, one of the essential components for the initiation of protein synthesis. Stabilizes the binding of IF-2 and IF-3 on the 30S subunit to which N-formylmethionyl-tRNA(fMet) subsequently binds. Helps modulate mRNA selection, yielding the 30S pre-initiation complex (PIC). Upon addition of the 50S ribosomal subunit IF-1, IF-2 and IF-3 are released leaving the mature 70S translation initiation complex. This chain is Translation initiation factor IF-1, chloroplastic, found in Tupiella akineta (Green alga).